The primary structure comprises 1070 residues: DNA-directed RNA polymerase subunit beta (1070 aa).

Belongs to the RNA polymerase beta chain family. In terms of assembly, in plastids the minimal PEP RNA polymerase catalytic core is composed of four subunits: alpha, beta, beta', and beta''. When a (nuclear-encoded) sigma factor is associated with the core the holoenzyme is formed, which can initiate transcription.

Its subcellular location is the plastid. It is found in the chloroplast. The catalysed reaction is RNA(n) + a ribonucleoside 5'-triphosphate = RNA(n+1) + diphosphate. Its function is as follows. DNA-dependent RNA polymerase catalyzes the transcription of DNA into RNA using the four ribonucleoside triphosphates as substrates. The protein is DNA-directed RNA polymerase subunit beta of Solanum lycopersicum (Tomato).